Reading from the N-terminus, the 412-residue chain is Proline-rich protein 30 (412 aa).

The segment covering 33–45 (HNLQPLSAHQSLR) has biased composition (polar residues). Disordered regions lie at residues 33-75 (HNLQ…QFGS), 123-174 (PLTP…SNRQ), and 318-412 (PKEV…KSSV). Composition is skewed to low complexity over residues 126–142 (PSFS…PHSP) and 334–350 (PSPA…ADPA). Positions 353–372 (TPSQTRSFRSAGLQSPNSPR) are enriched in polar residues.

The protein is Proline-rich protein 30 (PRR30) of Macaca fascicularis (Crab-eating macaque).